A 264-amino-acid polypeptide reads, in one-letter code: NAD kinase (264 aa).

The active-site Proton acceptor is Asp45. Residues Asp45 to Gly46, His50, Asn121 to Glu122, Arg147, Asp149, Ala184, and Gln224 each bind NAD(+).

It belongs to the NAD kinase family. A divalent metal cation serves as cofactor.

The protein localises to the cytoplasm. The catalysed reaction is NAD(+) + ATP = ADP + NADP(+) + H(+). Functionally, involved in the regulation of the intracellular balance of NAD and NADP, and is a key enzyme in the biosynthesis of NADP. Catalyzes specifically the phosphorylation on 2'-hydroxyl of the adenosine moiety of NAD to yield NADP. The chain is NAD kinase from Lysinibacillus sphaericus (strain C3-41).